The following is a 360-amino-acid chain: DNA integrity scanning protein DisA (360 aa).

A DAC domain is found at 9–147 (DNDLMDILNI…NNIKYVLRDS (139 aa)). Residues Gly76, Leu94, and 107–111 (TRHRT) each bind ATP.

It belongs to the DisA family. Homooctamer. Requires Mg(2+) as cofactor.

It carries out the reaction 2 ATP = 3',3'-c-di-AMP + 2 diphosphate. In terms of biological role, participates in a DNA-damage check-point that is active prior to asymmetric division when DNA is damaged. DisA forms globular foci that rapidly scan along the chromosomes during sporulation, searching for lesions. When a lesion is present, DisA pauses at the lesion site. This triggers a cellular response that culminates in a temporary block in sporulation initiation. Also has diadenylate cyclase activity, catalyzing the condensation of 2 ATP molecules into cyclic di-AMP (c-di-AMP). c-di-AMP acts as a signaling molecule that couples DNA integrity with progression of sporulation. The rise in c-di-AMP level generated by DisA while scanning the chromosome, operates as a positive signal that advances sporulation; upon encountering a lesion, the DisA focus arrests at the damaged site and halts c-di-AMP synthesis. In Clostridium tetani (strain Massachusetts / E88), this protein is DNA integrity scanning protein DisA.